The following is a 222-amino-acid chain: MNSTPKAVVIFSGGQDSTTCLFQAIQEFGVKNVEVVTFQYGQRHAIELEKAAWIAKDLGVKQTLIDTSVIKAITSNAMMEEREIKQEGNTPNTFVDGRNALFLLYTAIYAKGQGIRTIFTGVCETDFSGYPDCRDVFVKSMNVTLNLAMDYNFNIRTPLMYLTKKQTWALADKLGAFDYIRQHTHTCYLGVEGGCHTCPSCVLREKGLNEYLSEKTSGQKNV.

An ATP-binding site is contributed by phenylalanine 11 to leucine 21. Residues cysteine 187, cysteine 195, cysteine 198, and cysteine 201 each coordinate Zn(2+).

This sequence belongs to the QueC family. It depends on Zn(2+) as a cofactor.

It carries out the reaction 7-carboxy-7-deazaguanine + NH4(+) + ATP = 7-cyano-7-deazaguanine + ADP + phosphate + H2O + H(+). It participates in purine metabolism; 7-cyano-7-deazaguanine biosynthesis. In terms of biological role, catalyzes the ATP-dependent conversion of 7-carboxy-7-deazaguanine (CDG) to 7-cyano-7-deazaguanine (preQ(0)). The polypeptide is 7-cyano-7-deazaguanine synthase (Actinobacillus pleuropneumoniae serotype 3 (strain JL03)).